Reading from the N-terminus, the 362-residue chain is Acetylajmalan esterase 2 (362 aa).

The first 23 residues, 1–23 (MGFAARPFHIVFSLFVLAGATQA), serve as a signal peptide directing secretion. Serine 38 functions as the Nucleophile in the catalytic mechanism. Asparagine 100, asparagine 118, asparagine 151, and asparagine 202 each carry an N-linked (GlcNAc...) asparagine glycan. Active-site residues include aspartate 335 and histidine 338.

It belongs to the 'GDSL' lipolytic enzyme family. In terms of tissue distribution, confined to roots.

The catalysed reaction is 17-O-acetylnorajmaline + H2O = norajmaline + acetate + H(+). It carries out the reaction 17-O-acetylajmaline + H2O = ajmaline + acetate + H(+). The protein operates within alkaloid biosynthesis; ajmaline biosynthesis. Acetylesterase involved in the biosynthesis of ajmaline-type monoterpenoid indole alkaloids (MIAs) natural products, important plant-derived pharmaceuticals used in the therapy of heart disorders. Deacetylates 17-O-acetylnorajmaline to produce norajmaline. May also catalyze the conversion of 17-O-acetylajmaline to ajmaline. This chain is Acetylajmalan esterase 2, found in Rauvolfia serpentina (Serpentine wood).